A 387-amino-acid polypeptide reads, in one-letter code: 3-ketoacyl-CoA thiolase (387 aa).

The Acyl-thioester intermediate role is filled by Cys91. Residues His343 and Cys373 each act as proton acceptor in the active site.

It belongs to the thiolase-like superfamily. Thiolase family. In terms of assembly, heterotetramer of two alpha chains (FadB) and two beta chains (FadA).

Its subcellular location is the cytoplasm. It catalyses the reaction an acyl-CoA + acetyl-CoA = a 3-oxoacyl-CoA + CoA. Its pathway is lipid metabolism; fatty acid beta-oxidation. Functionally, catalyzes the final step of fatty acid oxidation in which acetyl-CoA is released and the CoA ester of a fatty acid two carbons shorter is formed. The chain is 3-ketoacyl-CoA thiolase from Yersinia enterocolitica serotype O:8 / biotype 1B (strain NCTC 13174 / 8081).